Reading from the N-terminus, the 215-residue chain is Protein HP-25 homolog 2 (215 aa).

Residues 1–30 form the signal peptide; it reads MPGRGGQSLSMVCVDVWILALSVLSVMADA. Residues 35–79 are disordered; the sequence is VTESCDSQGPPGLPGPPGLPGPPGPPGPPGPPGLRGPTGIPGDIE. One can recognise a Collagen-like domain in the interval 43–76; the sequence is GPPGLPGPPGLPGPPGPPGPPGPPGLRGPTGIPG. The segment covering 45-68 has biased composition (pro residues); sequence PGLPGPPGLPGPPGPPGPPGPPGL. Positions 82–215 constitute a C1q domain; that stretch reads LSPPKSAFAV…GYLLYGNYPG (134 aa).

The protein localises to the secreted. In Bos taurus (Bovine), this protein is Protein HP-25 homolog 2.